Reading from the N-terminus, the 427-residue chain is 3-phosphoshikimate 1-carboxyvinyltransferase (427 aa).

Residues Lys-20, Ser-21, and Arg-25 each coordinate 3-phosphoshikimate. Residue Lys-20 participates in phosphoenolpyruvate binding. Phosphoenolpyruvate contacts are provided by Gly-92 and Arg-120. Residues Ser-166, Gln-168, Asp-312, and Lys-339 each contribute to the 3-phosphoshikimate site. Gln-168 provides a ligand contact to phosphoenolpyruvate. The Proton acceptor role is filled by Asp-312. 2 residues coordinate phosphoenolpyruvate: Arg-343 and Arg-385.

The protein belongs to the EPSP synthase family. As to quaternary structure, monomer.

It is found in the cytoplasm. The enzyme catalyses 3-phosphoshikimate + phosphoenolpyruvate = 5-O-(1-carboxyvinyl)-3-phosphoshikimate + phosphate. The protein operates within metabolic intermediate biosynthesis; chorismate biosynthesis; chorismate from D-erythrose 4-phosphate and phosphoenolpyruvate: step 6/7. Functionally, catalyzes the transfer of the enolpyruvyl moiety of phosphoenolpyruvate (PEP) to the 5-hydroxyl of shikimate-3-phosphate (S3P) to produce enolpyruvyl shikimate-3-phosphate and inorganic phosphate. The protein is 3-phosphoshikimate 1-carboxyvinyltransferase of Streptococcus sanguinis (strain SK36).